The following is a 541-amino-acid chain: MSAKDVKFAADARERLIRGVDILANAVKVTLGPKGRNVLIEKSFGAPRITKDGVTVAKEIELEDKYENLGAQLLRQVASKTNDLAGDGTTTATVLAQAIVREGAKAVAASLNPLDLKRGIDLAVAEAIKDIEKRARKVQSSEEVAQVGTISANSDAAVGKIIATAVKKVGNDGVITVEEAKSLETELDVVEGLQFDRGYLSPYFVTNSDKLLVEFEEPYILIHESKLTSLQPLLPVLEAVVQTGRPLLVIAEDVEGEALATLVVNKLRGGLKVAAVKAPGFGDRRKAQLEDIAILTGGQTISQDLGIKLENVTLSQLGRARRIRIDKENTTVVGGTGKKKDIDARIAQIRAQIEETTSDYDREKLQERLAKLSGGVAVIRVGGATEVEVKEKKDRVDDALNATRAAIAEGIVPGGGVALLRAKAAVSKLTNPNPDIQAGIQIVLKALEAPIRQIADNAGVEGSIVVGKILENRSPTFGFDAQKEEYVDLIEAGIVDPAKVVRTALQDAASVAALIVTTEALVVELPKEKAALPAAGAGADF.

Residues 30–33, K51, 87–91, G415, and D496 each bind ATP; these read TLGP and DGTTT.

The protein belongs to the chaperonin (HSP60) family. In terms of assembly, forms a cylinder of 14 subunits composed of two heptameric rings stacked back-to-back. Interacts with the co-chaperonin GroES.

It is found in the cytoplasm. The catalysed reaction is ATP + H2O + a folded polypeptide = ADP + phosphate + an unfolded polypeptide.. Functionally, together with its co-chaperonin GroES, plays an essential role in assisting protein folding. The GroEL-GroES system forms a nano-cage that allows encapsulation of the non-native substrate proteins and provides a physical environment optimized to promote and accelerate protein folding. This is Chaperonin GroEL 2 from Bradyrhizobium sp. (strain BTAi1 / ATCC BAA-1182).